Consider the following 422-residue polypeptide: Cell division protein DivIB (422 aa).

Basic and acidic residues-rich tracts occupy residues 1–23 (MVDW…KQEE) and 62–75 (EEAK…DQEQ). Residues 1–77 (MVDWDKEAQR…DFAKDQEQKH (77 aa)) form a disordered region. Topologically, residues 1–109 (MVDWDKEAQR…LQLKSVSWSR (109 aa)) are cytoplasmic. A helical transmembrane segment spans residues 110–130 (LILAAAFLFMIIFSAFWLSPL). A POTRA domain is found at 131-202 (NRIATIEVSG…RTVEVNVQEF (72 aa)). The Extracellular segment spans residues 131 to 422 (NRIATIEVSG…TVTQTRSSNS (292 aa)). The tract at residues 329 to 422 (NPLNDPFASP…TVTQTRSSNS (94 aa)) is disordered. A compositionally biased stretch (basic and acidic residues) spans 338-379 (PEEKASYQEKVDQAKEKSKEKQAKADKHSSESKLGDKPKPRG). Positions 389-422 (TSSQRQTSSQSSPRPGTNSSQQSSTVTQTRSSNS) are enriched in low complexity.

The protein belongs to the FtsQ/DivIB family. DivIB subfamily.

It localises to the cell membrane. Its function is as follows. Cell division protein that may be involved in stabilizing or promoting the assembly of the division complex. The chain is Cell division protein DivIB from Aerococcus urinae (strain CCUG 59500 / ACS-120-V-Col10a).